Reading from the N-terminus, the 1323-residue chain is Alpha-factor-transporting ATPase (1323 aa).

The segment covering 1-10 (MFQEKSEKSS) has biased composition (basic and acidic residues). The segment at 1 to 23 (MFQEKSEKSSFPKRSSSLRSPSD) is disordered. Over residues 12-23 (PKRSSSLRSPSD) the composition is skewed to low complexity. An N-linked (GlcNAc...) asparagine glycan is attached at Asn-37. The chain crosses the membrane as a helical span at residues 42–62 (WPLILVGILLMGGSAIATLMN). The region spanning 45-337 (ILVGILLMGG…ITELLAILNT (293 aa)) is the ABC transmembrane type-1 1 domain. Asn-83 carries an N-linked (GlcNAc...) asparagine glycan. The helical transmembrane segment at 93-113 (LCVGLIGIGCCKMILVWLGMF) threads the bilayer. Asn-136 carries N-linked (GlcNAc...) asparagine glycosylation. The next 4 helical transmembrane spans lie at 169–189 (ILAS…MSFY), 192–212 (WSTT…GWYF), 281–301 (VLKT…NYLL), and 315–335 (FSSC…LAIL). The ABC transporter 1 domain maps to 373–609 (IYFKNVWFES…EIVQNYKSQG (237 aa)). 408–415 (GKSGSGKS) is an ATP binding site. Asn-450 is a glycosylation site (N-linked (GlcNAc...) asparagine). The chain crosses the membrane as a helical span at residues 677 to 697 (LLGFGILLAIFQGVSSPVFSY). The ABC transmembrane type-1 2 domain maps to 678–969 (LGFGILLAIF…LIHQLPEITR (292 aa)). Asn-714 carries an N-linked (GlcNAc...) asparagine glycan. Residues 724-744 (CISLSIAIFTGVTSYLSEFIL) traverse the membrane as a helical segment. Asn-777 and Asn-789 each carry an N-linked (GlcNAc...) asparagine glycan. Helical transmembrane passes span 801–821 (FFPL…WSIV), 828–848 (LVGI…GKIL), and 909–929 (IGFA…LFYG). An N-linked (GlcNAc...) asparagine glycan is attached at Asn-939. A helical transmembrane segment spans residues 941–961 (SQLLQVITLLSFTISNASILI). N-linked (GlcNAc...) asparagine glycans are attached at residues Asn-991, Asn-1030, and Asn-1039. The ABC transporter 2 domain occupies 1035 to 1321 (ISFNNVSFSY…DGEFTKITKT (287 aa)). Residue 1071 to 1078 (GQSGSGKS) participates in ATP binding. Asn-1097 carries an N-linked (GlcNAc...) asparagine glycan. Residues 1120-1140 (GLLCQTIAIVPQFPKFFSGTI) traverse the membrane as a helical segment. N-linked (GlcNAc...) asparagine glycosylation is found at Asn-1143, Asn-1149, and Asn-1157. The chain crosses the membrane as a helical span at residues 1170–1190 (ILKLVNLHQFIVSLPQGLLTI). A glycan (N-linked (GlcNAc...) asparagine) is linked at Asn-1192. A compositionally biased stretch (acidic residues) spans 1194–1208 (SDNDNDNGNENENEN). Residues 1194–1217 (SDNDNDNGNENENENENGNTISTS) are disordered.

This sequence belongs to the ABC transporter superfamily. Alpha-factor sex pheromone exporter (TC 3.A.1.206) family.

The protein localises to the membrane. The catalysed reaction is an [alpha-factor](in) + ATP + H2O = an [alpha-factor](out) + ADP + phosphate + H(+). The protein is Alpha-factor-transporting ATPase (HST6) of Candida albicans (strain WO-1) (Yeast).